Reading from the N-terminus, the 61-residue chain is Large ribosomal subunit protein bL28 (61 aa).

A disordered region spans residues 1–26; that stretch reads MAKDFINGKRTQFGNKRSHALNSSRR. Residues 9-25 are compositionally biased toward polar residues; that stretch reads KRTQFGNKRSHALNSSR.

Belongs to the bacterial ribosomal protein bL28 family.

The polypeptide is Large ribosomal subunit protein bL28 (Limosilactobacillus reuteri (strain DSM 20016) (Lactobacillus reuteri)).